The sequence spans 250 residues: Protein BTG4 (250 aa).

It belongs to the BTG family. Interacts with CNOT7 and EIF4E. Interacts with CNOT8. As to expression, expressed in oocytes. Expressed in testis and in olfactory epithelium.

In terms of biological role, adapter protein that bridges CNOT7, a catalytic subunit of the CCR4-NOT complex, to EIF4E, and facilitates maternal mRNAs decay during the maturation of oocytes and in the fertilized egg. It is therefore required for the maternal-zygotic transition (MZT), zygotic cleavage and initiation of embryonic development. The chain is Protein BTG4 (Btg4) from Mus musculus (Mouse).